A 337-amino-acid polypeptide reads, in one-letter code: MNDLKSIIGKVATGAPLSREEAASAFDSMMSGEATPSQMGALLMALRVRGETVEEITGAVSVMRAKMLRVDAPAGAVDIVGTGGDGSGSVNVSTCAAFIVAGAGIPVAKHGNRALSSRSGAADVLAALGVKIDLKPDQVGRCVQEAGIGFMFAPAHHPAMKNVGPTRVELATRTIFNLLGPLSNPAGVKHQMVGVFSRQWVEPLAQVLKNLGSKAAWVVHGSDGLDEITLTGPTFVAALEHGQIRTFEVTPEQAGLGLCGSDGLKGGDAAANAVALQSVLDGMPSPYRDVALLNAAAALVVAGRAKTLAEGVAIGRDALDSGAAAARLKHLIAVSNS.

Residues G81, 84 to 85 (GD), S89, 91 to 94 (NVST), 109 to 117 (KHGNRALSS), and A121 each bind 5-phospho-alpha-D-ribose 1-diphosphate. G81 provides a ligand contact to anthranilate. A Mg(2+)-binding site is contributed by S93. N112 lines the anthranilate pocket. R167 contributes to the anthranilate binding site. Residues D226 and E227 each coordinate Mg(2+).

The protein belongs to the anthranilate phosphoribosyltransferase family. Homodimer. Mg(2+) is required as a cofactor.

It catalyses the reaction N-(5-phospho-beta-D-ribosyl)anthranilate + diphosphate = 5-phospho-alpha-D-ribose 1-diphosphate + anthranilate. It participates in amino-acid biosynthesis; L-tryptophan biosynthesis; L-tryptophan from chorismate: step 2/5. In terms of biological role, catalyzes the transfer of the phosphoribosyl group of 5-phosphorylribose-1-pyrophosphate (PRPP) to anthranilate to yield N-(5'-phosphoribosyl)-anthranilate (PRA). This Bradyrhizobium sp. (strain BTAi1 / ATCC BAA-1182) protein is Anthranilate phosphoribosyltransferase.